Here is a 667-residue protein sequence, read N- to C-terminus: Gamma-tubulin complex component 4 (667 aa).

Residues 425–445 (HKADATQAREGPSRETSPREA) are disordered.

The protein belongs to the TUBGCP family. As to quaternary structure, component of the gamma-tubulin ring complex (gTuRC) consisting of TUBGCP2, TUBGCP3, TUBGCP4, TUBGCP5 and TUBGCP6 and gamma-tubulin TUBG1 or TUBG2. TUBGCP2, TUBGCP3, TUBGCP4, TUBGCP5 and TUBGCP6 assemble in a 5:5:2:1:1 stoichiometry; each is associated with a gamma-tubulin, thereby arranging 14 gamma-tubulins in a helical manner. Gamma-tubulin at the first position is blocked by TUBGCP3 at the last position, allowing 13 protafilaments to grow into a microtubule. The gTuRC (via TUBGCP3 and TUBGCP6) interacts with ACTB and MZT1; the interactions form a luminal bridge that stabilizes the initial structure during complex assembly. The gTuRC (via TUBGCP2) interacts with MZT2A/MZT2B and CDK5RAP2 (via CM1 motif); the interactions play a role in gTuRC activation. Interacts with NINL. Interacts with ATF5; the ATF5:PCNT:polyglutamylated tubulin (PGT) tripartite unites the mother centriole and the pericentriolar material (PCM) in the centrosome. In terms of tissue distribution, ubiquitously expressed.

It localises to the cytoplasm. The protein localises to the cytoskeleton. It is found in the microtubule organizing center. Its subcellular location is the centrosome. Its function is as follows. Component of the gamma-tubulin ring complex (gTuRC) which mediates microtubule nucleation. The gTuRC regulates the minus-end nucleation of alpha-beta tubulin heterodimers that grow into microtubule protafilaments, a critical step in centrosome duplication and spindle formation. The sequence is that of Gamma-tubulin complex component 4 (TUBGCP4) from Homo sapiens (Human).